A 263-amino-acid polypeptide reads, in one-letter code: MAAAAAAAAAAAAGDSDSWDADTFSMEDPVRKVAGGGTAGGDRWEGEDEDEDVKDNWDDDDDENKEEAEVKPEVKISEKKKIAEKIKEKERQQKKRQEEIKKRLEEPEESKVLTPEEQLADKLRLKKLQEESDLELAKETFGVNNTVYGIDAMNPSSRDDFTEFGKLLKDKITQYEKSLYYASFLEALVRDVCISLEIDDLKKITNSLTVLCSEKQKQEKQSKAKKKKKGVVPGGGLKATMKDDLADYGGYEGGYVQDYEDFM.

The span at 1–13 (MAAAAAAAAAAAA) shows a compositional bias: low complexity. The disordered stretch occupies residues 1-115 (MAAAAAAAAA…EPEESKVLTP (115 aa)). Alanine 2 bears the N-acetylalanine mark. The sufficient for interaction with EIF3B stretch occupies residues 6 to 74 (AAAAAAAAGD…KEEAEVKPEV (69 aa)). Residues serine 16, serine 18, and serine 25 each carry the phosphoserine modification. Residues 45-66 (EGEDEDEDVKDNWDDDDDENKE) show a composition bias toward acidic residues. Positions 67-111 (EAEVKPEVKISEKKKIAEKIKEKERQQKKRQEEIKKRLEEPEESK) are enriched in basic and acidic residues. Residues 75–140 (KISEKKKIAE…ESDLELAKET (66 aa)) adopt a coiled-coil conformation. A Glycyl lysine isopeptide (Lys-Gly) (interchain with G-Cter in SUMO2) cross-link involves residue lysine 111. Position 114 is a phosphothreonine (threonine 114). Position 132 is a phosphoserine (serine 132). The interval 248 to 263 (YGGYEGGYVQDYEDFM) is promotes stable association with the 40S ribosome. A Phosphotyrosine modification is found at tyrosine 259.

Belongs to the eIF-3 subunit J family. Component of the eukaryotic translation initiation factor 3 (eIF-3) complex, which is composed of 13 subunits: EIF3A, EIF3B, EIF3C, EIF3D, EIF3E, EIF3F, EIF3G, EIF3H, EIF3I, EIF3J, EIF3K, EIF3L and EIF3M. The eIF-3 complex appears to include 3 stable modules: module A is composed of EIF3A, EIF3B, EIF3G and EIF3I; module B is composed of EIF3F, EIF3H, and EIF3M; and module C is composed of EIF3C, EIF3D, EIF3E, EIF3K and EIF3L. EIF3C of module C binds EIF3B of module A and EIF3H of module B, thereby linking the three modules. EIF3J is a labile subunit that binds to the eIF-3 complex via EIF3B. The eIF-3 complex interacts with RPS6KB1 under conditions of nutrient depletion. Mitogenic stimulation leads to binding and activation of a complex composed of MTOR and RPTOR, leading to phosphorylation and release of RPS6KB1 and binding of EIF4B to eIF-3. Phosphorylated. Phosphorylation is enhanced upon serum stimulation.

Its subcellular location is the cytoplasm. In terms of biological role, component of the eukaryotic translation initiation factor 3 (eIF-3) complex, which is required for several steps in the initiation of protein synthesis. The eIF-3 complex associates with the 40S ribosome and facilitates the recruitment of eIF-1, eIF-1A, eIF-2:GTP:methionyl-tRNAi and eIF-5 to form the 43S pre-initiation complex (43S PIC). The eIF-3 complex stimulates mRNA recruitment to the 43S PIC and scanning of the mRNA for AUG recognition. The eIF-3 complex is also required for disassembly and recycling of post-termination ribosomal complexes and subsequently prevents premature joining of the 40S and 60S ribosomal subunits prior to initiation. The eIF-3 complex specifically targets and initiates translation of a subset of mRNAs involved in cell proliferation, including cell cycling, differentiation and apoptosis, and uses different modes of RNA stem-loop binding to exert either translational activation or repression. This subunit binds directly within the mRNA entry channel of the 40S ribosome to the aminoacyl (A) site. It may regulate the interaction between the 43S PIC and mRNA. The chain is Eukaryotic translation initiation factor 3 subunit J-B (Eif3j2) from Mus musculus (Mouse).